A 159-amino-acid polypeptide reads, in one-letter code: Putative polyketide cyclase (159 aa).

The protein to polyketide cyclases.

Its function is as follows. Involved in developmentally regulated synthesis of a compound biosynthetically related to polyketide antibiotics which is essential for spore color in Streptomyces coelicolor. This chain is Putative polyketide cyclase, found in Streptomyces coelicolor (strain ATCC BAA-471 / A3(2) / M145).